Consider the following 512-residue polypeptide: Cytochrome P450 monooxygenase poxM (512 aa).

Residues 15–35 form a helical membrane-spanning segment; that stretch reads LLKGATIALSFFSLYLFGLVI. Cys449 provides a ligand contact to heme.

This sequence belongs to the cytochrome P450 family. The cofactor is heme.

It localises to the membrane. It functions in the pathway secondary metabolite biosynthesis. In terms of biological role, cytochrome P450 monooxygenase; part of the gene cluster that mediates the biosynthesis of oxaleimides, cytotoxic compounds containing an unusual disubstituted succinimide moiety. The first step of the pathway is provided by the HR-PKS poxF that serves in a new mode of collaborative biosynthesis with the PKS-NRPS poxE, by providing the olefin containing amino acid substrate via the synthesis of an ACP-bound dec-4-enoate. The cytochrome P450 monooxygenase poxM-catalyzed oxidation at the alpha-position creates the enzyme-bound 2-hydroxydec-4-enoyl-ACP thioester, which may be prone to spontaneous hydrolysis to yield 2-hydroxydec-4-enoic acid due to increased electrophilicity of the carbonyl. 2-hydroxydec-4-enoic acid can then be further oxidized by poxM to yield the alpha-ketoacid 2-oxodec-4-enoicacid, which is reductively aminated by the aminotransferase poxL to yield (S,E)-2-aminodec-4-enoic acid. The Hybrid PKS-NRPS synthetase poxE then performs condensation between the octaketide product of its PKS modules and the amino group of (S,E)-2-aminodec-4-enoic acid which is activated and incorporated by the adenylation domain. The resulting aminoacyl product can be cyclized by the Diels-Alderase PoxQ and reductively released by the reductive (R) domain of poxE to yield an aldehyde intermediate. The released aldehyde is then substrate for a Knoevenagel condensation by the hydrolyase poxO followed by an oxidation at the 5-position of the pyrrolidone ring. The presence of the olefin from the amino acid building block allows for migration of the substituted allyl group to occur. This allylic transposition reaction takes place in a conjugate addition, semipinacol-like fashion to yield a succinimide intermediate. Iterative two-electron oxidations of the C7 methyl of the succinimide intermediate to the carboxylic acid can be catalyzed by one of two remaining cytochrome P450 monooxygenasess poxC or poxD to yield oxaleimide A. Subsequent oxidation yields the maleimide scaffold oxaleimide I. Both oxaleimide A and oxaleimide I can undergo oxidative modifications in the decalin ring to yield the series of products oxaleimides B to H. The sequence is that of Cytochrome P450 monooxygenase poxM from Penicillium oxalicum (strain 114-2 / CGMCC 5302) (Penicillium decumbens).